The following is a 161-amino-acid chain: Type-1 angiotensin II receptor-associated protein (161 aa).

Over 1–26 the chain is Extracellular; sequence MELPAVNLKVILLVHWLLTTWGCLVF. Residues 27 to 47 traverse the membrane as a helical segment; that stretch reads SSSYAWGNFTILALGVWAVAQ. Over 48 to 53 the chain is Cytoplasmic; that stretch reads RDSIDA. The chain crosses the membrane as a helical span at residues 54–74; sequence IGMFLGGLVATIFLDIIYISI. Over 75-86 the chain is Extracellular; that stretch reads FYSSVATGDTGR. The chain crosses the membrane as a helical span at residues 87–107; the sequence is FGAGMAILSLLLKPFSCCLVY. Residues 108-161 lie on the Cytoplasmic side of the membrane; that stretch reads HMHRERGGELPLRPDFFGPSQEHSAYQTIDSSSDAAADPFASLENKGQAVPRGY. The interaction with AGTR1 stretch occupies residues 110 to 122; the sequence is HRERGGELPLRPD. Ser127 is subject to Phosphoserine. A Phosphothreonine modification is found at Thr135. Ser138 carries the phosphoserine modification.

Interacts with RACK1, and with the C-terminal region of AGTR1. In terms of tissue distribution, ubiquitous but more abundant in kidney, testis and heart.

Its subcellular location is the endoplasmic reticulum membrane. The protein resides in the golgi apparatus membrane. It localises to the cytoplasmic vesicle membrane. In terms of biological role, appears to be a negative regulator of type-1 angiotensin II receptor-mediated signaling by regulating receptor internalization as well as mechanism of receptor desensitization such as phosphorylation. Also induces a decrease in angiotensin II-stimulated transcriptional activity. May play a role of negative regulator in cardiomyocyte hypertrophy induced by angiotensin II through an inhibition of p38 mitogen-activated protein kinase pathway. The sequence is that of Type-1 angiotensin II receptor-associated protein (Agtrap) from Mus musculus (Mouse).